The primary structure comprises 298 residues: Elongation factor Ts (298 aa).

The interval 80–83 (TDFV) is involved in Mg(2+) ion dislocation from EF-Tu.

Belongs to the EF-Ts family.

The protein resides in the cytoplasm. In terms of biological role, associates with the EF-Tu.GDP complex and induces the exchange of GDP to GTP. It remains bound to the aminoacyl-tRNA.EF-Tu.GTP complex up to the GTP hydrolysis stage on the ribosome. This chain is Elongation factor Ts, found in Paracidovorax citrulli (strain AAC00-1) (Acidovorax citrulli).